The chain runs to 3010 residues: MSTNPKPQRKTKRNTNRRPQDVKFPGGGQIVGGVYLLPRRGPRLGVRAPRKTSERSQPRGRRQPIPKARRPEGRTWAQPGYPWPLYGNEGLGWAGWLLSPRGSRPSWGPTDPRRRSRNLGKVIDTLTCGFADLMGYIPLVGAPLGGAARALAHGVRVLEDGVNYATGNLPGCSFSIFLLALLSCLTTPASAYEVHNVSGIYHVTNDCSNASIVYEAADLIMHTPGCVPCVREGNSSRCWVALTPTLAARNVTIPTTTIRRHVDLLVGAAAFCSAMYVGDLCGSVFLVSQLFTFSPRRHVTLQDCNCSIYPGHVSGHRMAWDMMMNWSPTTALVVSQLLRIPQAVVDMVAGAHWGVLAGLAYYSMAGNWAKVLIVMLLFAGVDGDTHVTGGAQAKTTNRLVSMFASGPSQKIQLINTNGSWHINRTALNCNDSLQTGFLAALFYTHSFNSSGCPERMAQCRTIDKFDQGWGPITYAESSRSDQRPYCWHYPPPQCTIVPASEVCGPVYCFTPSPVVVGTTDRFGVPTYRWGENETDVLLLNNTRPPQGNWFGCTWMNSTGFTKTCGGPPCNIGGVGNNTLTCPTDCFRKHPEATYTKCGSGPWLTPRCMVDYPYRLWHYPCTVNFTIFKVRMYVGGVEHRLNAACNWTRGERCDLEDRDRPELSPLLLSTTEWQVLPCSFTTLPALSTGLIHLHQNIVDVQYLYGIGSAVVSFAIKWEYVLLLFLLLADARVCACLWMMLLIAQAEAALENLVVLNSASVAGAHGILSFLVFFCAAWYIKGRLVPGATYALYGVWPLLLLLLALPPRAYAMDREMAASCGGAVFVGLVLLTLSPYYKVFLARLIWWLQYFTTRAEADLHVWIPPLNARGGRDAIILLMCAVHPELIFDITKLLIAILGPLMVLQAGITRVPYFVRAQGLIHACMLVRKVAGGHYVQMAFMKLGALTGTYIYNHLTPLRDWPRAGLRDLAVAVEPVVFSDMETKIITWGADTAACGDIILGLPVSARRGKEILLGPADSLEGRGLRLLAPITAYSQQTRGLLGCIITSLTGRDKNQVEGEVQVVSTATQSFLATCVNGVCWTVYHGAGSKTLAAPKGPITQMYTNVDQDLVGWPKPPGARSLTPCTCGSSDLYLVTRHADVIPVRRRGDSRGSLLSPRPVSYLKGSSGGPLLCPFGHAVGIFRAAVCTRGVAKAVDFVPVESMETTMRSPVFTDNSSPPAVPQSFQVAHLHAPTGSGKSTKVPAAYAAQGYKVLVLNPSVAATLGFGAYMSKAHGIDPNIRTGVRTITTGAPVTYSTYGKFLADGGCSGGAYDIIICDECHSTDSTTILGIGTVLDQAETAGARLVVLATATPPGSVTVPHPNIEEVALSNTGEIPFYGKAIPIEAIRGGRHLIFCHSKKKCDELAAKLSGLGINAVAYYRGLDVSVIPTIGDVVVVATDALMTGYTGDFDSVIDCNTCVTQTVDFSLDPTFTIETTTVPQDAVSRSQRRGRTGRGRRGIYRFVTPGERPSGMFDSSVLCECYDAGCAWYELTPAETSVRLRAYLNTPGLPVCQDHLEFWESVFTGLTHIDAHFLSQTKQAGDNFPYLVAYQATVCARAQAPPPSWDQMWKCLIRLKPTLHGPTPLLYRLGAVQNEVTLTHPITKYIMACMSADLEVVTSTWVLVGGVLAALAAYCLTTGSVVIVGRIILSGRPAIVPDRELLYQEFDEMEECASHLPYIEQGMQLAEQFKQKALGLLQTATKQAEAAAPVVESKWRALETFWAKHMWNFISGIQYLAGLSTLPGNPAIASLMAFTASITSPLTTQSTLLFNILGGWVAAQLAPPSAASAFVGAGIAGAAVGSIGLGKVLVDILAGYGAGVAGALVAFKVMSGEMPSTEDLVNLLPAILSPGALVVGVVCAAILRRHVGPGEGAVQWMNRLIAFASRGNHVSPTHYVPESDAAARVTQILSSLTITQLLKRLHQWINEDCSTPCSGSWLRDVWDWICTVLTDFKTWLQSKLLPQLPGVPFFSCQRGYKGVWRGDGIMQTTCPCGAQITGHVKNGSMRIVGPKTCSNTWHGTFPINAYTTGPCTPSPAPNYSRALWRVAAEEYVEVTRVGDFHYVTGMTTDNVKCPCQVPAPEFFSEVDGVRLHRYAPACRPLLREEVTFQVGLNQYLVGSQLPCEPEPDVAVLTSMLTDPSHITAETAKRRLARGSPPSLASSSASQLSAPSLKATCTTHHVSPDADLIEANLLWRQEMGGNITRVESENKVVVLDSFDPLRAEEDEREVSVPAEILRKSKKFPAAMPIWARPDYNPPLLESWKDPDYVPPVVHGCPLPPIKAPPIPPPRRKRTVVLTESSVSSALAELATKTFGSSESSAVDSGTATALPDQASDDGDKGSDVESYSSMPPLEGEPGDPDLSDGSWSTVSEEASEDVVCCSMSYTWTGALITPCAAEESKLPINALSNSLLRHHNMVYATTSRSAGLRQKKVTFDRLQVLDDHYRDVLKEMKAKASTVKAKLLSVEEACKLTPPHSAKSKFGYGAKDVRNLSSKAVNHIHSVWKDLLEDTVTPIDTTIMAKNEVFCVQPEKGGRKPARLIVFPDLGVRVCEKMALYDVVSTLPQVVMGSSYGFQYSPGQRVEFLVNTWKSKKNPMGFSYDTRCFDSTVTENDIRVEESIYQCCDLAPEARQAIKSLTERLYIGGPLTNSKGQNCGYRRCRASGVLTTSCGNTLTCYLKASAACRAAKLQDCTMLVNGDDLVVICESAGTQEDAASLRVFTEAMTRYSAPPGDPPQPEYDLELITSCSSNVSVAHDASGKRVYYLTRDPTTPLARAAWETARHTPVNSWLGNIIMYAPTLWARMILMTHFFSILLAQEQLEKALDCQIYGACYSIEPLDLPQIIERLHGLSAFSLHSYSPGEINRVASCLRKLGVPPLRVWRHRARSVRARLLSQGGRAATCGKYLFNWAVKTKLKLTPIPAASRLDLSGWFVAGYSGGDIYHSLSRARPRWFMLCLLLLSVGVGIYLLPNR.

An N-acetylserine; by host modification is found at Ser-2. The segment at 2–23 (STNPKPQRKTKRNTNRRPQDVK) is interaction with STAT1. An interaction with EIF2AK2/PKR region spans residues 2–58 (STNPKPQRKTKRNTNRRPQDVKFPGGGQIVGGVYLLPRRGPRLGVRAPRKTSERSQP). The tract at residues 2 to 59 (STNPKPQRKTKRNTNRRPQDVKFPGGGQIVGGVYLLPRRGPRLGVRAPRKTSERSQPR) is interaction with DDX3X. A disordered region spans residues 2-75 (STNPKPQRKT…PKARRPEGRT (74 aa)). 2 short sequence motifs (nuclear localization signal) span residues 5–13 (PKPQRKTKR) and 38–43 (PRRGPR). Residues 7 to 16 (PQRKTKRNTN) show a composition bias toward basic residues. Low complexity predominate over residues 32–47 (GGVYLLPRRGPRLGVR). Phosphoserine; by host is present on Ser-53. 2 short sequence motifs (nuclear localization signal) span residues 58–64 (PRGRRQP) and 66–71 (PKARRP). Basic residues predominate over residues 58 to 68 (PRGRRQPIPKA). Ser-99 carries the phosphoserine; by host modification. The interval 112–152 (PRRRSRNLGKVIDTLTCGFADLMGYIPLVGAPLGGAARALA) is important for endoplasmic reticulum and mitochondrial localization. Residue Ser-116 is modified to Phosphoserine; by host PKA. An interaction with APOA2 region spans residues 122 to 173 (VIDTLTCGFADLMGYIPLVGAPLGGAARALAHGVRVLEDGVNYATGNLPGCS). Residues 164 to 167 (YATG) form an important for lipid droplets localization region. Residues 178-191 (LLALLSCLTTPASA) constitute a propeptide, ER anchor for the core protein, removed in mature form by host signal peptidase. Residues 190 to 358 (SAYEVHNVSG…AGAHWGVLAG (169 aa)) lie on the Lumenal side of the membrane. N-linked (GlcNAc...) asparagine; by host glycosylation is found at Asn-196, Asn-209, Asn-234, and Asn-250. An important for fusion region spans residues 265 to 296 (LVGAAAFCSAMYVGDLCGSVFLVSQLFTFSPR). The N-linked (GlcNAc...) asparagine; by host glycan is linked to Asn-305. The helical transmembrane segment at 359-379 (LAYYSMAGNWAKVLIVMLLFA) threads the bilayer. The Lumenal portion of the chain corresponds to 380-725 (GVDGDTHVTG…WEYVLLLFLL (346 aa)). Residues 385–411 (THVTGGAQAKTTNRLVSMFASGPSQKI) form an HVR1 region. A glycan (N-linked (GlcNAc...) asparagine; by host) is linked at Asn-417. 3 N-linked (GlcNAc...) (high mannose) asparagine; by host glycosylation sites follow: Asn-423, Asn-430, and Asn-448. Intrachain disulfides connect Cys-429-Cys-552, Cys-452-Cys-459, Cys-486-Cys-494, and Cys-503-Cys-508. An HVR2 region spans residues 474 to 482 (YAESSRSDQ). The tract at residues 480–494 (SDQRPYCWHYPPPQC) is CD81-binding 1. N-linked (GlcNAc...) (high mannose) asparagine; by host glycans are attached at residues Asn-532 and Asn-540. The interval 544 to 552 (PPQGNWFGC) is CD81-binding 2. An N-linked (GlcNAc...) (high mannose) asparagine; by host glycan is attached at Asn-556. Cys-564 and Cys-569 are joined by a disulfide. Asn-576 carries an N-linked (GlcNAc...) (high mannose) asparagine; by host glycan. Intrachain disulfides connect Cys-581-Cys-585, Cys-597-Cys-620, and Cys-607-Cys-644. Asn-623 and Asn-645 each carry an N-linked (GlcNAc...) (high mannose) asparagine; by host glycan. A disulfide bridge connects residues Cys-652 and Cys-677. The EIF2AK2/eIF2-alpha phosphorylation homology domain (PePHD) stretch occupies residues 660–671 (PELSPLLLSTTE). Residues 726-746 (LADARVCACLWMMLLIAQAEA) traverse the membrane as a helical segment. The Lumenal portion of the chain corresponds to 747-757 (ALENLVVLNSA). The chain crosses the membrane as a helical span at residues 758 to 778 (SVAGAHGILSFLVFFCAAWYI). Over 779–781 (KGR) the chain is Cytoplasmic. The helical transmembrane segment at 782 to 803 (LVPGATYALYGVWPLLLLLLAL) threads the bilayer. Topologically, residues 804 to 813 (PPRAYAMDRE) are lumenal. A helical membrane pass occupies residues 814-834 (MAASCGGAVFVGLVLLTLSPY). At 835-838 (YKVF) the chain is on the cytoplasmic side. Residues 839 to 859 (LARLIWWLQYFTTRAEADLHV) form a helical membrane-spanning segment. Residues 860-881 (WIPPLNARGGRDAIILLMCAVH) are Lumenal-facing. Residues 882-902 (PELIFDITKLLIAILGPLMVL) traverse the membrane as a helical segment. The Peptidase C18 domain occupies 903–1026 (QAGITRVPYF…SLEGRGLRLL (124 aa)). Residues 903 to 1657 (QAGITRVPYF…CMSADLEVVT (755 aa)) lie on the Cytoplasmic side of the membrane. The interval 904–1206 (AGITRVPYFV…PVESMETTMR (303 aa)) is protease NS2-3. Residue Cys-922 is the site of S-palmitoyl cysteine; by host attachment. The interval 929 to 949 (AGGHYVQMAFMKLGALTGTYI) is interaction with host SCPS1. Residues His-952, Glu-972, and Cys-993 each act as for protease NS2 activity; shared with dimeric partner in the active site. Residues 1027-1208 (APITAYSQQT…ESMETTMRSP (182 aa)) enclose the Peptidase S29 domain. Catalysis depends on charge relay system; for serine protease NS3 activity residues His-1083 and Asp-1107. Cys-1123 and Cys-1125 together coordinate Zn(2+). The Charge relay system; for serine protease NS3 activity role is filled by Ser-1165. Zn(2+)-binding residues include Cys-1171 and His-1175. The region spanning 1217-1369 (PAVPQSFQVA…PNIEEVALSN (153 aa)) is the Helicase ATP-binding domain. 1230 to 1237 (APTGSGKS) lines the ATP pocket. Positions 1237 and 1317 each coordinate Mg(2+). A DECH box motif is present at residues 1316–1319 (DECH). Residues 1486 to 1497 (QRRGRTGRGRRG) are RNA-binding. Residues 1658 to 1678 (STWVLVGGVLAALAAYCLTTG) traverse the membrane as a helical segment. Residues 1679–1690 (SVVIVGRIILSG) form an NS3-binding region. Residues 1679-1805 (SVVIVGRIIL…SITSPLTTQS (127 aa)) are Cytoplasmic-facing. A helical membrane pass occupies residues 1806–1826 (TLLFNILGGWVAAQLAPPSAA). Topologically, residues 1827-1828 (SA) are lumenal. Residues 1829–1849 (FVGAGIAGAAVGSIGLGKVLV) form a helical membrane-spanning segment. A glycine zipper region spans residues 1833–1861 (GIAGAAVGSIGLGKVLVDILAGYGAGVAG). Residue Asp-1850 is a topological domain, cytoplasmic. A helical membrane pass occupies residues 1851 to 1871 (ILAGYGAGVAGALVAFKVMSG). Residues 1872–1881 (EMPSTEDLVN) lie on the Lumenal side of the membrane. The helical transmembrane segment at 1882–1902 (LLPAILSPGALVVGVVCAAIL) threads the bilayer. Residues 1903–1972 (RRHVGPGEGA…WINEDCSTPC (70 aa)) are Cytoplasmic-facing. S-palmitoyl cysteine; by host attachment occurs at residues Cys-1968 and Cys-1972. The stretch at 1973 to 2003 (SGSWLRDVWDWICTVLTDFKTWLQSKLLPQL) is an intramembrane region. The membrane-binding stretch occupies residues 1978–1998 (RDVWDWICTVLTDFKTWLQSK). At 2004 to 2989 (PGVPFFSCQR…YHSLSRARPR (986 aa)) the chain is on the cytoplasmic side. Positions 2005-2221 (GVPFFSCQRG…KATCTTHHVS (217 aa)) are RNA-binding. Cys-2011, Cys-2029, Cys-2031, and Cys-2052 together coordinate Zn(2+). Positions 2120–2208 (EFFSEVDGVR…ASSSASQLSA (89 aa)) are FKBP8-binding. The tract at residues 2120 to 2332 (EFFSEVDGVR…PIPPPRRKRT (213 aa)) is transcriptional activation. The tract at residues 2135–2139 (PACRP) is interaction with non-structural protein 4A. The interval 2189 to 2441 (RLARGSPPSL…PCAAEESKLP (253 aa)) is interaction with host SKP2. At Ser-2194 the chain carries Phosphoserine; by host; in p56. Phosphoserine; by host; in p58 occurs at positions 2197, 2201, 2204, 2207, and 2210. Residues 2210 to 2249 (SLKATCTTHHVSPDADLIEANLLWRQEMGGNITRVESENK) are ISDR. Residues 2210-2275 (SLKATCTTHH…REVSVPAEIL (66 aa)) are EIF2AK2/PKR-binding. The NS4B-binding stretch occupies residues 2249–2306 (KVVVLDSFDPLRAEEDEREVSVPAEILRKSKKFPAAMPIWARPDYNPPLLESWKDPDY). The short motif at 2322–2325 (PPIP) is the SH3-binding element. The Nuclear localization signal motif lies at 2326 to 2334 (PPRRKRTVV). The interaction with host IFI27 stretch occupies residues 2332–2441 (TVVLTESSVS…PCAAEESKLP (110 aa)). Lys-2350 is covalently cross-linked (Glycyl lysine isopeptide (Lys-Gly) (interchain with G-Cter in ubiquitin)). Over residues 2351–2365 (TFGSSESSAVDSGTA) the composition is skewed to polar residues. A disordered region spans residues 2351–2407 (TFGSSESSAVDSGTATALPDQASDDGDKGSDVESYSSMPPLEGEPGDPDLSDGSWST). The interval 2354-2377 (SSESSAVDSGTATALPDQASDDGD) is V3. Ser-2448 and Ser-2461 each carry phosphoserine; by host. One can recognise a RdRp catalytic domain in the interval 2633-2751 (PMGFSYDTRC…ICESAGTQED (119 aa)). Residues Asp-2639, Asp-2737, and Asp-2738 each contribute to the Mg(2+) site. A helical transmembrane segment spans residues 2990 to 3010 (WFMLCLLLLSVGVGIYLLPNR).

This sequence belongs to the hepacivirus polyprotein family. In terms of assembly, homooligomer. Interacts with E1 (via C-terminus). Interacts with the non-structural protein 5A. Interacts (via N-terminus) with host STAT1 (via SH2 domain); this interaction results in decreased STAT1 phosphorylation and ubiquitin-mediated proteasome-dependent STAT1 degradation, leading to decreased IFN-stimulated gene transcription. Interacts with host STAT3; this interaction constitutively activates STAT3. Associates with host LTBR receptor. Interacts with host TNFRSF1A receptor and possibly induces apoptosis. Interacts with host HNRPK. Interacts with host YWHAE. Interacts with host UBE3A/E6AP. Interacts with host DDX3X. Interacts with host APOA2. Interacts with host RXRA protein. Interacts with host SP110 isoform 3/Sp110b; this interaction sequesters the transcriptional corepressor SP110 away from the nucleus. Interacts with host CREB3 nuclear transcription protein; this interaction triggers cell transformation. Interacts with host ACY3. Interacts with host C1QR1. Interacts with host RBM24; this interaction, which enhances the interaction of the mature core protein with 5'-UTR, may inhibit viral translation and favor replication. Interacts (via N-terminus) with host EIF2AK2/PKR (via N-terminus); this interaction induces the autophosphorylation of EIF2AK2. Part of the viral assembly initiation complex composed of NS2, E1, E2, NS3, NS4A, NS5A and the mature core protein. As to quaternary structure, forms a heterodimer with envelope glycoprotein E2. Interacts with mature core protein. Interacts with protease NS2. The heterodimer E1/E2 interacts with host CLDN1; this interaction plays a role in viral entry into host cell. Interacts with host SPSB2 (via C-terminus). Part of the viral assembly initiation complex composed of NS2, E1, E2, NS3, NS4A, NS5A and the mature core protein. Interacts with host NEURL3; this interaction prevents E1 binding to glycoprotein E2. Forms a heterodimer with envelope glycoprotein E1. Interacts with host CD81 and SCARB1 receptors; these interactions play a role in viral entry into host cell. Interacts with host EIF2AK2/PKR; this interaction inhibits EIF2AK2 and probably allows the virus to evade the innate immune response. Interacts with host CD209/DC-SIGN and CLEC4M/DC-SIGNR. Interact with host SPCS1; this interaction is essential for viral particle assembly. Interacts with protease NS2. The heterodimer E1/E2 interacts with host CLDN1; this interaction plays a role in viral entry into host cell. Part of the viral assembly initiation complex composed of NS2, E1, E2, NS3, NS4A, NS5A and the mature core protein. Interacts with host SLC3A2/4F2hc; the interaction may facilitate viral entry into host cell. Interacts with human PLSCR1. In terms of assembly, homohexamer. Homoheptamer. Interacts with protease NS2. As to quaternary structure, homodimer. Interacts with host SPCS1; this interaction is essential for viral particle assembly. Interacts with envelope glycoprotein E1. Interacts with envelope glycoprotein E2. Interacts with viroporin p7. Interacts with serine protease/helicase NS3. Part of the replication complex composed of NS2, NS3, NS4A, NS4B, NS5A and the RNA-directed RNA polymerase embedded in an ER-derived membranous web. Part of the viral assembly initiation complex composed of NS2, E1, E2, NS3, NS4A, NS5A and the mature core protein. Interacts with protease NS2. Interacts with non-structural protein 4A; this interaction stabilizes the folding of NS3 serine protease. NS3-NS4A interaction is essential for NS3 activation and allows membrane anchorage of the latter. NS3/NS4A complex also prevents phosphorylation of host IRF3, thus preventing the establishment of dsRNA induced antiviral state. Interacts with host MAVS; this interaction leads to the cleavage and inhibition of host MAVS. Interacts with host TICAM1; this interaction leads to the cleavage and inhibition of host TICAM1. Interacts with host TANK-binding kinase/TBK1; this interaction results in the inhibition of the association between TBK1 and IRF3, which leads to the inhibition of IRF3 activation. Interacts with host RBM24. Part of the replication complex composed of NS2, NS3, NS4A, NS4B, NS5A and the RNA-directed RNA polymerase embedded in an ER-derived membranous web. Part of the viral assembly initiation complex composed of NS2, E1, E2, NS3, NS4A, NS5A and the mature core protein. In terms of assembly, interacts with NS3 serine protease; this interaction stabilizes the folding of NS3 serine protease. NS3-NS4A interaction is essential for NS3 activation and allows membrane anchorage of the latter. Interacts with non-structural protein 5A (via N-terminus). Part of the replication complex composed of NS2, NS3, NS4A, NS4B, NS5A and the RNA-directed RNA polymerase embedded in an ER-derived membranous web. Part of the viral assembly initiation complex composed of NS2, E1, E2, NS3, NS4A, NS5A and the mature core protein. As to quaternary structure, monomer. Homodimer; dimerization is required for RNA-binding. Interacts with the mature core protein. Interacts (via N-terminus) with non-structural protein 4A. Interacts with non-structural protein 4B. Interacts with RNA-directed RNA polymerase. Part of the viral assembly initiation complex composed of NS2, E1, E2, NS3, NS4A, NS5A and the mature core protein. Part of the replication complex composed of NS2, NS3, NS4A, NS4B, NS5A and the RNA-directed RNA polymerase embedded in an ER-derived membranous web. Interacts with host GRB2. Interacts with host BIN1. Interacts with host PIK3R1. Interacts with host SRCAP. Interacts with host FKBP8. Interacts with host VAPB. Interacts with host EIF2AK2/PKR; this interaction leads to disruption of EIF2AK2 dimerization by NS5A and probably allows the virus to evade the innate immune response. Interacts (via N-terminus) with host PACSIN2 (via N-terminus); this interaction attenuates protein kinase C alpha-mediated phosphorylation of PACSIN2 by disrupting the interaction between PACSIN2 and PRKCA. Interacts (via N-terminus) with host SRC kinase (via SH2 domain). Interacts with most Src-family kinases. Interacts with host IFI27 and SKP2; promotes the ubiquitin-mediated proteasomal degradation of NS5A. Interacts with host GPS2. Interacts with host TNFRSF21; this interaction allows the modulation by the virus of JNK, p38 MAPK, STAT3, and Akt signaling pathways in a DR6-dependent manner. Interacts (via N-terminus) with host CIDEB (via N-terminus); this interaction seems to regulate the association of HCV particles with APOE. Interacts with host CHKA/Choline Kinase-alpha; CHKA bridges host PI4KA and NS5A and potentiates NS5A-stimulated PI4KA activity, which then facilitates the targeting of the ternary complex to the ER for viral replication. Interacts with host SPSB2 (via C-terminus); this interaction targets NS5A for ubiquitination and degradation. Interacts with host RAB18; this interaction may promote the association of NS5A and other replicase components with lipid droplets. Interacts (via region D2) with host PPIA/CYPA; the interaction stimulates RNA-binding ability of NS5A and is dependent on the peptidyl-prolyl cis-trans isomerase activity of PPIA/CYPA. Interacts with host TRIM14; this interaction induces the degradation of NS5A. Homooligomer. Interacts with non-structural protein 5A. Interacts with host VAPB. Interacts with host PRK2/PKN2. Interacts with host HNRNPA1 and SEPT6; these interactions facilitate the viral replication. Part of the replication complex composed of NS2, NS3, NS4A, NS4B, NS5A and the RNA-directed RNA polymerase embedded in an ER-derived membranous web. Requires Zn(2+) as cofactor. The cofactor is Mg(2+). Specific enzymatic cleavages in vivo yield mature proteins. The structural proteins, core, E1, E2 and p7 are produced by proteolytic processing by host signal peptidases. The core protein precursor is synthesized as a 23 kDa, which is retained in the ER membrane through the hydrophobic signal peptide. Cleavage by the signal peptidase releases the 21 kDa mature core protein. The cleavage of the core protein precursor occurs between aminoacids 176 and 188 but the exact cleavage site is not known. Some degraded forms of the core protein appear as well during the course of infection. The other proteins (p7, NS2, NS3, NS4A, NS4B, NS5A and NS5B) are cleaved by the viral proteases. Autoprocessing between NS2 and NS3 is mediated by the NS2 cysteine protease catalytic domain and regulated by the NS3 N-terminal domain. Post-translationally, phosphorylated by host PKC and PKA. In terms of processing, ubiquitinated; mediated by UBE3A and leading to core protein subsequent proteasomal degradation. Highly N-glycosylated. Post-translationally, palmitoylation is required for NS2/3 autoprocessing and E2 recruitment to membranes. In terms of processing, palmitoylated. This modification may play a role in its polymerization or in protein-protein interactions. Phosphorylated on serines in a basal form termed p56. p58 is a hyperphosphorylated form of p56. p56 and p58 coexist in the cell in roughly equivalent amounts. Hyperphosphorylation is dependent on the presence of NS4A. Host CSNK1A1/CKI-alpha or RPS6KB1 kinases may be responsible for NS5A phosphorylation. Post-translationally, tyrosine phosphorylation is essential for the interaction with host SRC. In terms of processing, the N-terminus is phosphorylated by host PRK2/PKN2.

Its subcellular location is the host endoplasmic reticulum membrane. It is found in the host mitochondrion membrane. It localises to the virion. The protein resides in the host cytoplasm. The protein localises to the host nucleus. Its subcellular location is the host lipid droplet. It is found in the virion membrane. It localises to the host mitochondrion. The protein resides in the host cell membrane. The protein localises to the host perinuclear region. It carries out the reaction Hydrolysis of four peptide bonds in the viral precursor polyprotein, commonly with Asp or Glu in the P6 position, Cys or Thr in P1 and Ser or Ala in P1'.. The enzyme catalyses a ribonucleoside 5'-triphosphate + H2O = a ribonucleoside 5'-diphosphate + phosphate + H(+). It catalyses the reaction ATP + H2O = ADP + phosphate + H(+). The catalysed reaction is RNA(n) + a ribonucleoside 5'-triphosphate = RNA(n+1) + diphosphate. Inhibited by the antiviral drug hexamethylene amiloride. Inhibition by amantadine appears to be genotype-dependent. Also inhibited by long-alkyl-chain iminosugar derivatives. With respect to regulation, activity is up-regulated by PRK2/PKN2-mediated phosphorylation. Its activity is regulated as follows. Activity of auto-protease NS2 is dependent on zinc ions and completely inhibited by EDTA, 1,10-phenanthroline, iodocetamide and N-ethylmaleimide. According to PubMed:9261354, completely inhibited by the serine protease inhibitors TLCK and TPCK. According to PubMed:8189501, almost completely inhibited by TPCK and slightly inhibited by TLCK. Not inhibited by antipain, aprotinin, E64, PMSF and pepstatin. Also inhibited by NS2 and NS4A derived peptides. Serine protease/helicase NS3 is also activated by zinc ions. In terms of biological role, packages viral RNA to form a viral nucleocapsid, and promotes virion budding. Participates in the viral particle production as a result of its interaction with the non-structural protein 5A. Binds RNA and may function as a RNA chaperone to induce the RNA structural rearrangements taking place during virus replication. Modulates viral translation initiation by interacting with viral IRES and 40S ribosomal subunit. Affects various cell signaling pathways, host immunity and lipid metabolism. Prevents the establishment of cellular antiviral state by blocking the interferon-alpha/beta (IFN-alpha/beta) and IFN-gamma signaling pathways and by blocking the formation of phosphorylated STAT1 and promoting ubiquitin-mediated proteasome-dependent degradation of STAT1. Activates STAT3 leading to cellular transformation. Regulates the activity of cellular genes, including c-myc and c-fos. May repress the promoter of p53, and sequester CREB3 and SP110 isoform 3/Sp110b in the cytoplasm. Represses cell cycle negative regulating factor CDKN1A, thereby interrupting an important check point of normal cell cycle regulation. Targets transcription factors involved in the regulation of inflammatory responses and in the immune response: suppresses NF-kappa-B activation, and activates AP-1. Binds to dendritic cells (DCs) via C1QR1, resulting in down-regulation of T-lymphocytes proliferation. Alters lipid metabolism by interacting with hepatocellular proteins involved in lipid accumulation and storage. Induces up-regulation of FAS promoter activity, and thereby contributes to the increased triglyceride accumulation in hepatocytes (steatosis). Functionally, forms a heterodimer with envelope glycoprotein E2, which mediates virus attachment to the host cell, virion internalization through clathrin-dependent endocytosis and fusion with host membrane. Fusion with the host cell is most likely mediated by both E1 and E2, through conformational rearrangements of the heterodimer required for fusion rather than a classical class II fusion mechanism. E1/E2 heterodimer binds host apolipoproteins such as APOB and APOE thereby forming a lipo-viro-particle (LVP). APOE associated to the LVP allows the initial virus attachment to cell surface receptors such as the heparan sulfate proteoglycans (HSPGs), syndecan-1 (SDC1), syndecan-1 (SDC2), the low-density lipoprotein receptor (LDLR) and scavenger receptor class B type I (SCARB1). The cholesterol transfer activity of SCARB1 allows E2 exposure and binding of E2 to SCARB1 and the tetraspanin CD81. E1/E2 heterodimer binding on CD81 activates the epithelial growth factor receptor (EGFR) signaling pathway. Diffusion of the complex E1-E2-EGFR-SCARB1-CD81 to the cell lateral membrane allows further interaction with Claudin 1 (CLDN1) and occludin (OCLN) to finally trigger HCV entry. Forms a heterodimer with envelope glycoprotein E1, which mediates virus attachment to the host cell, virion internalization through clathrin-dependent endocytosis and fusion with host membrane. Fusion with the host cell is most likely mediated by both E1 and E2, through conformational rearrangements of the heterodimer required for fusion rather than a classical class II fusion mechanism. The interaction between envelope glycoprotein E2 and host apolipoprotein E/APOE allows the proper assembly, maturation and infectivity of the viral particles. This interaction is probably promoted via the up-regulation of cellular autophagy by the virus. E1/E2 heterodimer binds host apolipoproteins such as APOB and APOE thereby forming a lipo-viro-particle (LVP). APOE associated to the LVP allows the initial virus attachment to cell surface receptors such as the heparan sulfate proteoglycans (HSPGs), syndecan-1 (SDC1), syndecan-1 (SDC2), the low-density lipoprotein receptor (LDLR) and scavenger receptor class B type I (SCARB1). The cholesterol transfer activity of SCARB1 allows E2 exposure and binding of E2 to SCARB1 and the tetraspanin CD81. E1/E2 heterodimer binding on CD81 activates the epithelial growth factor receptor (EGFR) signaling pathway. Diffusion of the complex E1-E2-EGFR-SCARB1-CD81 to the cell lateral membrane allows further interaction with Claudin 1 (CLDN1) and occludin (OCLN) to finally trigger HCV entry. Inhibits host EIF2AK2/PKR activation, preventing the establishment of an antiviral state. Viral ligand for CD209/DC-SIGN and CLEC4M/DC-SIGNR, which are respectively found on dendritic cells (DCs), and on liver sinusoidal endothelial cells and macrophage-like cells of lymph node sinuses. These interactions allow the capture of circulating HCV particles by these cells and subsequent facilitated transmission to permissive cells such as hepatocytes and lymphocyte subpopulations. The interaction between E2 and host amino acid transporter complex formed by SLC3A2 and SLC7A5/LAT1 may facilitate viral entry into host cell. Its function is as follows. Ion channel protein that acts as a viroporin and plays an essential role in the assembly, envelopment and secretion of viral particles. Regulates the host cell secretory pathway, which induces the intracellular retention of viral glycoproteins and favors assembly of viral particles. Creates a pore in acidic organelles and releases Ca(2+) and H(+) in the cytoplasm of infected cells, leading to a productive viral infection. High levels of cytoplasmic Ca(2+) may trigger membrane trafficking and transport of viral ER-associated proteins to viroplasms, sites of viral genome replication. This ionic imbalance induces the assembly of the inflammasome complex, which triggers the maturation of pro-IL-1beta into IL-1beta through the action of caspase-1. Targets also host mitochondria and induces mitochondrial depolarization. In addition of its role as a viroporin, acts as a lipid raft adhesion factor. In terms of biological role, cysteine protease required for the proteolytic auto-cleavage between the non-structural proteins NS2 and NS3. The N-terminus of NS3 is required for the function of NS2 protease (active region NS2-3). Promotes the initiation of viral particle assembly by mediating the interaction between structural and non-structural proteins. Functionally, displays three enzymatic activities: serine protease with a chymotrypsin-like fold, NTPase and RNA helicase. NS3 serine protease, in association with NS4A, is responsible for the cleavages of NS3-NS4A, NS4A-NS4B, NS4B-NS5A and NS5A-NS5B. The NS3/NS4A complex prevents phosphorylation of host IRF3, thus preventing the establishment of dsRNA induced antiviral state. The NS3/NS4A complex induces host amino acid transporter component SLC3A2, thus contributing to HCV propagation. NS3 RNA helicase binds to RNA and unwinds both dsDNA and dsRNA in the 3' to 5' direction, and likely resolves RNA complicated stable secondary structures in the template strand. Binds a single ATP and catalyzes the unzipping of a single base pair of dsRNA. Inhibits host antiviral proteins TBK1 and IRF3 thereby preventing the establishment of an antiviral state. Cleaves host MAVS/CARDIF thereby preventing the establishment of an antiviral state. Cleaves host TICAM1/TRIF, thereby disrupting TLR3 signaling and preventing the establishment of an antiviral state. Peptide cofactor which forms a non-covalent complex with the N-terminal of NS3 serine protease. The NS3/NS4A complex prevents phosphorylation of host IRF3, thus preventing the establishment of dsRNA induced antiviral state. The NS3/NS4A complex induces host amino acid transporter component SLC3A2, thus contributing to HCV propagation. Its function is as follows. Induces a specific membrane alteration that serves as a scaffold for the virus replication complex. This membrane alteration gives rise to the so-called ER-derived membranous web that contains the replication complex. NS4B self-interaction contributes to its function in membranous web formation. Promotes host TRIF protein degradation in a CASP8-dependent manner thereby inhibiting host TLR3-mediated interferon signaling. Disrupts the interaction between STING and TBK1 contributing to the inhibition of interferon signaling. In terms of biological role, phosphorylated protein that is indispensable for viral replication and assembly. Both hypo- and hyperphosphorylated states are required for the viral life cycle. The hyperphosphorylated form of NS5A is an inhibitor of viral replication. Involved in RNA-binding and especially in binding to the viral genome. Zinc is essential for RNA-binding. Participates in the viral particle production as a result of its interaction with the viral mature core protein. Its interaction with host VAPB may target the viral replication complex to vesicles. Down-regulates viral IRES translation initiation. Mediates interferon resistance, presumably by interacting with and inhibiting host EIF2AK2/PKR. Prevents BIN1-induced apoptosis. Acts as a transcriptional activator of some host genes important for viral replication when localized in the nucleus. Via the interaction with host PACSIN2, modulates lipid droplet formation in order to promote virion assembly. Modulates TNFRSF21/DR6 signaling pathway for viral propagation. Functionally, RNA-dependent RNA polymerase that performs primer-template recognition and RNA synthesis during viral replication. Initiates RNA transcription/replication at a flavin adenine dinucleotide (FAD), resulting in a 5'- FAD cap on viral RNAs. In this way, recognition of viral 5' RNA by host pattern recognition receptors can be bypassed, thereby evading activation of antiviral pathways. This chain is Genome polyprotein, found in Hepatitis C virus genotype 1b (isolate BK) (HCV).